Here is a 294-residue protein sequence, read N- to C-terminus: Nucleotide-binding protein Adeh_0147 (294 aa).

17–24 lines the ATP pocket; that stretch reads GVSGSGKS. 68–71 is a binding site for GTP; sequence DARE.

Belongs to the RapZ-like family.

Its function is as follows. Displays ATPase and GTPase activities. This chain is Nucleotide-binding protein Adeh_0147, found in Anaeromyxobacter dehalogenans (strain 2CP-C).